The chain runs to 176 residues: Adenine phosphoribosyltransferase (176 aa).

The protein belongs to the purine/pyrimidine phosphoribosyltransferase family. As to quaternary structure, homodimer.

Its subcellular location is the cytoplasm. It catalyses the reaction AMP + diphosphate = 5-phospho-alpha-D-ribose 1-diphosphate + adenine. It functions in the pathway purine metabolism; AMP biosynthesis via salvage pathway; AMP from adenine: step 1/1. Catalyzes a salvage reaction resulting in the formation of AMP, that is energically less costly than de novo synthesis. In Borrelia garinii subsp. bavariensis (strain ATCC BAA-2496 / DSM 23469 / PBi) (Borreliella bavariensis), this protein is Adenine phosphoribosyltransferase.